Reading from the N-terminus, the 300-residue chain is Epimerase family protein MW0731 (300 aa).

Belongs to the NAD(P)-dependent epimerase/dehydratase family. SDR39U1 subfamily.

The polypeptide is Epimerase family protein MW0731 (Staphylococcus aureus (strain MW2)).